The following is a 300-amino-acid chain: Bifunctional protein FolD 2 (300 aa).

NADP(+) contacts are provided by residues 165-167 (GRS), Ser-190, and Ile-231.

The protein belongs to the tetrahydrofolate dehydrogenase/cyclohydrolase family. Homodimer.

It catalyses the reaction (6R)-5,10-methylene-5,6,7,8-tetrahydrofolate + NADP(+) = (6R)-5,10-methenyltetrahydrofolate + NADPH. The catalysed reaction is (6R)-5,10-methenyltetrahydrofolate + H2O = (6R)-10-formyltetrahydrofolate + H(+). It participates in one-carbon metabolism; tetrahydrofolate interconversion. In terms of biological role, catalyzes the oxidation of 5,10-methylenetetrahydrofolate to 5,10-methenyltetrahydrofolate and then the hydrolysis of 5,10-methenyltetrahydrofolate to 10-formyltetrahydrofolate. This chain is Bifunctional protein FolD 2, found in Pseudomonas savastanoi pv. phaseolicola (strain 1448A / Race 6) (Pseudomonas syringae pv. phaseolicola (strain 1448A / Race 6)).